A 61-amino-acid chain; its full sequence is Transcription elongation factor Spt4 (61 aa).

Residues cysteine 6, cysteine 9, cysteine 18, and cysteine 21 each coordinate Zn(2+).

This sequence belongs to the archaeal Spt4 family. As to quaternary structure, heterodimer composed of Spt4 and Spt5.

Functionally, stimulates transcription elongation. This Pyrococcus furiosus (strain ATCC 43587 / DSM 3638 / JCM 8422 / Vc1) protein is Transcription elongation factor Spt4.